A 237-amino-acid polypeptide reads, in one-letter code: ADTIVAVELDSYPNTDIGDPSYPHIGIDIKSIRSKSTARWNMQTGKVGTAHISYNSVAKRLTAVVSYSGSSSTTVSYDVDLNNVLPEWVRVGLSATTGLYKETNTILSWSFTSKLKTNSIADANALHFSFHQFTQNPKDLILQGDATTDSDGNLELTKVSSSGSPQGSSVGRALFYAPVHIWESSAVVASFDATFTFLIKSPDSEPADGITFFIANTDTSIPSGSSGRLLGLFPDAN.

Mn(2+)-binding residues include Glu-8 and Asp-10. Asp-10, Tyr-12, Asn-14, and Asp-19 together coordinate Ca(2+). Tyr-12 is a binding site for a carbohydrate. Residues Asp-19, His-24, and Ser-34 each contribute to the Mn(2+) site. 99–100 provides a ligand contact to a carbohydrate; sequence LY. Asp-208 contacts Ca(2+). Arg-228 lines the a carbohydrate pocket.

It belongs to the leguminous lectin family. As to quaternary structure, homotetramer. Post-translationally, the beta and gamma chains are produced by partial proteolytic processing of the lectin alpha chain by an asparaginyl endopeptidase.

D-mannose/D-glucose-binding lectin. Also binds derivatives of glucose and mannose such as more complex glycans. The sequence is that of Mannose-specific lectin alpha chain from Cymbosema roseum (Dioclea purpurea).